The following is a 93-amino-acid chain: Acylphosphatase (93 aa).

The 87-residue stretch at 6–92 (RAHVWVGGKV…EGLTHFEVLR (87 aa)) folds into the Acylphosphatase-like domain. Active-site residues include Arg21 and Asn39.

The protein belongs to the acylphosphatase family.

It catalyses the reaction an acyl phosphate + H2O = a carboxylate + phosphate + H(+). This Gloeobacter violaceus (strain ATCC 29082 / PCC 7421) protein is Acylphosphatase (acyP).